The chain runs to 207 residues: Large ribosomal subunit protein uL4 (207 aa).

Belongs to the universal ribosomal protein uL4 family. Part of the 50S ribosomal subunit.

Functionally, one of the primary rRNA binding proteins, this protein initially binds near the 5'-end of the 23S rRNA. It is important during the early stages of 50S assembly. It makes multiple contacts with different domains of the 23S rRNA in the assembled 50S subunit and ribosome. Forms part of the polypeptide exit tunnel. This chain is Large ribosomal subunit protein uL4, found in Geobacter metallireducens (strain ATCC 53774 / DSM 7210 / GS-15).